The chain runs to 113 residues: Nascent polypeptide-associated complex protein (113 aa).

The 69-residue stretch at Gly-5–Ile-73 folds into the NAC-A/B domain.

It belongs to the NAC-alpha family. As to quaternary structure, homodimer. Interacts with the ribosome. Binds ribosomal RNA.

In terms of biological role, contacts the emerging nascent chain on the ribosome. The protein is Nascent polypeptide-associated complex protein of Methanosarcina acetivorans (strain ATCC 35395 / DSM 2834 / JCM 12185 / C2A).